A 205-amino-acid polypeptide reads, in one-letter code: FMN-dependent NADH:quinone oxidoreductase (205 aa).

Residues Ser-10 and 16–18 (SVS) contribute to the FMN site.

Belongs to the azoreductase type 1 family. Homodimer. FMN serves as cofactor.

It catalyses the reaction 2 a quinone + NADH + H(+) = 2 a 1,4-benzosemiquinone + NAD(+). The enzyme catalyses N,N-dimethyl-1,4-phenylenediamine + anthranilate + 2 NAD(+) = 2-(4-dimethylaminophenyl)diazenylbenzoate + 2 NADH + 2 H(+). Quinone reductase that provides resistance to thiol-specific stress caused by electrophilic quinones. In terms of biological role, also exhibits azoreductase activity. Catalyzes the reductive cleavage of the azo bond in aromatic azo compounds to the corresponding amines. The protein is FMN-dependent NADH:quinone oxidoreductase of Agrobacterium fabrum (strain C58 / ATCC 33970) (Agrobacterium tumefaciens (strain C58)).